We begin with the raw amino-acid sequence, 217 residues long: 3,4-dihydroxy-2-butanone 4-phosphate synthase (217 aa).

D-ribulose 5-phosphate contacts are provided by residues 37-38 (RE), Asp-42, 150-154 (RGGHT), and Glu-174. Glu-38 is a Mg(2+) binding site. Residue His-153 participates in Mg(2+) binding.

The protein belongs to the DHBP synthase family. Homodimer. Mg(2+) is required as a cofactor. Requires Mn(2+) as cofactor.

It catalyses the reaction D-ribulose 5-phosphate = (2S)-2-hydroxy-3-oxobutyl phosphate + formate + H(+). The protein operates within cofactor biosynthesis; riboflavin biosynthesis; 2-hydroxy-3-oxobutyl phosphate from D-ribulose 5-phosphate: step 1/1. In terms of biological role, catalyzes the conversion of D-ribulose 5-phosphate to formate and 3,4-dihydroxy-2-butanone 4-phosphate. The protein is 3,4-dihydroxy-2-butanone 4-phosphate synthase of Klebsiella pneumoniae subsp. pneumoniae (strain ATCC 700721 / MGH 78578).